A 184-amino-acid chain; its full sequence is NADH-quinone oxidoreductase subunit B (184 aa).

The [4Fe-4S] cluster site is built by C63, C64, C128, and C158.

It belongs to the complex I 20 kDa subunit family. As to quaternary structure, NDH-1 is composed of 14 different subunits. Subunits NuoB, C, D, E, F, and G constitute the peripheral sector of the complex. The cofactor is [4Fe-4S] cluster.

The protein localises to the cell inner membrane. It carries out the reaction a quinone + NADH + 5 H(+)(in) = a quinol + NAD(+) + 4 H(+)(out). NDH-1 shuttles electrons from NADH, via FMN and iron-sulfur (Fe-S) centers, to quinones in the respiratory chain. Couples the redox reaction to proton translocation (for every two electrons transferred, four hydrogen ions are translocated across the cytoplasmic membrane), and thus conserves the redox energy in a proton gradient. The protein is NADH-quinone oxidoreductase subunit B of Stenotrophomonas maltophilia (strain R551-3).